Here is a 248-residue protein sequence, read N- to C-terminus: Adenosylcobinamide-GDP ribazoletransferase (248 aa).

Transmembrane regions (helical) follow at residues 24-44, 70-90, 106-126, 134-154, 157-177, 188-210, and 228-248; these read EINL…IGAW, IIIT…GLFS, VGAN…SLFL, IGWL…LLFA, TYAG…WWPV, LGLF…TIIY, and AGGQ…WGLI.

The protein belongs to the CobS family. Mg(2+) is required as a cofactor.

The protein localises to the cell membrane. The enzyme catalyses alpha-ribazole + adenosylcob(III)inamide-GDP = adenosylcob(III)alamin + GMP + H(+). The catalysed reaction is alpha-ribazole 5'-phosphate + adenosylcob(III)inamide-GDP = adenosylcob(III)alamin 5'-phosphate + GMP + H(+). It functions in the pathway cofactor biosynthesis; adenosylcobalamin biosynthesis; adenosylcobalamin from cob(II)yrinate a,c-diamide: step 7/7. Functionally, joins adenosylcobinamide-GDP and alpha-ribazole to generate adenosylcobalamin (Ado-cobalamin). Also synthesizes adenosylcobalamin 5'-phosphate from adenosylcobinamide-GDP and alpha-ribazole 5'-phosphate. This Listeria monocytogenes serotype 4b (strain CLIP80459) protein is Adenosylcobinamide-GDP ribazoletransferase.